The chain runs to 202 residues: Myosin regulatory light chain 10 (202 aa).

The segment at 1-21 (MGQSSLDHGVQGPVAGTGDFG) is disordered. EF-hand domains are found at residues 60 to 95 (SQIQEFKEAFTIMDQNRDGFIDKEDLRDTFAALGRI), 130 to 165 (DPEETILHAFKVFDTEGKGFVKADFIKEKLMTQADR), and 166 to 201 (FSEEEVKQMFAAFPPDVCGNLDYRNLCYVITHGEEK). 4 residues coordinate Ca(2+): Asp73, Asn75, Asp77, and Asp84.

In terms of assembly, myosin is a hexamer of 2 heavy chains and 4 light chains. Specifically expressed in precursor B- and T-lymphocytes.

This chain is Myosin regulatory light chain 10 (Myl10), found in Mus musculus (Mouse).